The following is a 225-amino-acid chain: Vacuolar protein sorting-associated protein 2 homolog 1 (225 aa).

Residues 13-54 (AELLRENKRMLDKSIREIERERQGLQTQEKKLINEIKKTAKQ) are a coiled coil.

This sequence belongs to the SNF7 family. Component of the endosomal sorting required for transport complex III (ESCRT-III), composed at least of VPS2, VPS20, VPS24 and VPS32. Interacts with SKD1.

It is found in the endosome. In terms of biological role, component of the ESCRT-III complex, which is required for multivesicular bodies (MVBs) formation and sorting of endosomal cargo proteins into MVBs. The ESCRT-III complex is probably involved in the concentration of MVB cargo. This Arabidopsis thaliana (Mouse-ear cress) protein is Vacuolar protein sorting-associated protein 2 homolog 1 (VPS2.1).